The following is a 56-amino-acid chain: Endoregulin (56 aa).

Residues 25–45 form a helical membrane-spanning segment; it reads LTVIGLFTSTFLLFVLFAVVF.

In terms of assembly, homooligomer. Can also form heterooligomers with other sarcoplasmic/endoplasmic reticulum calcium ATPase (SERCA) regulators ARLN, PLN, SLN and STRIT1/DWORF. Monomer. Interacts as a monomer with ATP2A2/SERCA2; the interaction results in inhibition of ATP2A2 Ca(2+) affinity. Largely expressed in non-muscle tissues with the exception of weak expression in body wall muscles at 14.5 dpc. Expressed in epithelial cells of the trachea, bronchus, lung, intestine, pancreas, and liver.

It is found in the endoplasmic reticulum membrane. Its function is as follows. Inhibits the activity of the calcium ATPases ATP2A2/SERCA2 and ATP2A3/SERCA3 by decreasing their apparent affinity for Ca(2+). The protein is Endoregulin (Erln) of Mus musculus (Mouse).